Here is a 104-residue protein sequence, read N- to C-terminus: Large ribosomal subunit protein uL24 (104 aa).

Belongs to the universal ribosomal protein uL24 family. As to quaternary structure, part of the 50S ribosomal subunit.

One of two assembly initiator proteins, it binds directly to the 5'-end of the 23S rRNA, where it nucleates assembly of the 50S subunit. Functionally, one of the proteins that surrounds the polypeptide exit tunnel on the outside of the subunit. The polypeptide is Large ribosomal subunit protein uL24 (Salmonella paratyphi A (strain ATCC 9150 / SARB42)).